The primary structure comprises 511 residues: Ent-copalyl diphosphate synthase (511 aa).

Asp291 and Asp293 together coordinate a divalent metal cation. Positions 291 to 294 match the DXDD motif motif; sequence DSDD.

The protein belongs to the terpene synthase family. In terms of assembly, homodimer. It depends on a divalent metal cation as a cofactor.

The enzyme catalyses (2E,6E,10E)-geranylgeranyl diphosphate = ent-copalyl diphosphate. It participates in antibiotic biosynthesis. In terms of biological role, involved in viguiepinol biosynthesis. Catalyzes the conversion of geranylgeranyl diphosphate (GGDP) into copalyl diphosphate (ent-CDP). This chain is Ent-copalyl diphosphate synthase, found in Streptomyces sp. (strain KO-3988).